The chain runs to 203 residues: UPF0637 protein EF_3078 (203 aa).

The protein belongs to the UPF0637 family.

In Enterococcus faecalis (strain ATCC 700802 / V583), this protein is UPF0637 protein EF_3078.